Consider the following 683-residue polypeptide: UvrABC system protein B (683 aa).

In terms of domain architecture, Helicase ATP-binding spans 31–414 (AGFEKGYKEQ…ELERTDHKVE (384 aa)). ATP is bound at residue 44 to 51 (GATGTGKT). The Beta-hairpin signature appears at 97–120 (YYDYYQPEAYVPQSDTYIEKDSAI). The region spanning 435–601 (QIDDLVGEIN…TIIKPVHDVI (167 aa)) is the Helicase C-terminal domain. A UVR domain is found at 632-667 (KTMIKNLQEQMKEAAKKLDFEEAANLRDAIMELQSS). The tract at residues 662 to 683 (MELQSSSRRPKTRKGKALNGKR) is disordered. The span at 669–683 (RRPKTRKGKALNGKR) shows a compositional bias: basic residues.

Belongs to the UvrB family. As to quaternary structure, forms a heterotetramer with UvrA during the search for lesions. Interacts with UvrC in an incision complex.

Its subcellular location is the cytoplasm. Its function is as follows. The UvrABC repair system catalyzes the recognition and processing of DNA lesions. A damage recognition complex composed of 2 UvrA and 2 UvrB subunits scans DNA for abnormalities. Upon binding of the UvrA(2)B(2) complex to a putative damaged site, the DNA wraps around one UvrB monomer. DNA wrap is dependent on ATP binding by UvrB and probably causes local melting of the DNA helix, facilitating insertion of UvrB beta-hairpin between the DNA strands. Then UvrB probes one DNA strand for the presence of a lesion. If a lesion is found the UvrA subunits dissociate and the UvrB-DNA preincision complex is formed. This complex is subsequently bound by UvrC and the second UvrB is released. If no lesion is found, the DNA wraps around the other UvrB subunit that will check the other stand for damage. This Lactobacillus acidophilus (strain ATCC 700396 / NCK56 / N2 / NCFM) protein is UvrABC system protein B.